We begin with the raw amino-acid sequence, 313 residues long: Olfactory receptor 2B6 (313 aa).

Residues 1–25 lie on the Extracellular side of the membrane; the sequence is MNWVNDSIIQEFILLGFSDRPWLEF. An N-linked (GlcNAc...) asparagine glycan is attached at N5. A helical membrane pass occupies residues 26 to 49; sequence PLLVVFLISYTVTIFGNLTIILVS. The Cytoplasmic segment spans residues 50–57; that stretch reads RLDTKLHT. Residues 58-79 traverse the membrane as a helical segment; sequence PMYFFLTNLSLLDLCYTTCTVP. Residues 80-100 are Extracellular-facing; the sequence is QMLVNLCSIRKVISYRGCVAQ. Cysteines 97 and 189 form a disulfide. Residues 101-120 form a helical membrane-spanning segment; the sequence is LFIFLALGATEYLLLAVMSF. Residues 121–139 lie on the Cytoplasmic side of the membrane; it reads DRFVAICRPLHYSVIMHQR. Residues 140–158 traverse the membrane as a helical segment; that stretch reads LCLQLAAASWVTGFSNSVW. Topologically, residues 159–195 are extracellular; sequence LSTLTLQLPLCDPYVIDHFLCEVPALLKLSCVETTAN. Residues 196 to 219 traverse the membrane as a helical segment; sequence EAELFLVSELFHLIPLTLILISYA. The Cytoplasmic portion of the chain corresponds to 220–236; that stretch reads FIVRAVLRIQSAEGRQK. The chain crosses the membrane as a helical span at residues 237–259; the sequence is AFGTCGSHLIVVSLFYSTAVSVY. At 260–272 the chain is on the extracellular side; the sequence is LQPPSPSSKDQGK. A helical transmembrane segment spans residues 273–292; it reads MVSLFYGIIAPMLNPLIYTL. Topologically, residues 293 to 313 are cytoplasmic; it reads RNKEVKEGFKRLVARVFLIKK.

The protein belongs to the G-protein coupled receptor 1 family.

The protein resides in the cell membrane. Its function is as follows. Odorant receptor. This chain is Olfactory receptor 2B6, found in Homo sapiens (Human).